The primary structure comprises 880 residues: Valine--tRNA ligase (880 aa).

A 'HIGH' region motif is present at residues Pro49–His59. Positions Lys525 to Ser529 match the 'KMSKS' region motif. Lys528 serves as a coordination point for ATP. A coiled-coil region spans residues Leu809 to Arg880.

It belongs to the class-I aminoacyl-tRNA synthetase family. ValS type 1 subfamily. In terms of assembly, monomer.

The protein localises to the cytoplasm. It catalyses the reaction tRNA(Val) + L-valine + ATP = L-valyl-tRNA(Val) + AMP + diphosphate. Catalyzes the attachment of valine to tRNA(Val). As ValRS can inadvertently accommodate and process structurally similar amino acids such as threonine, to avoid such errors, it has a 'posttransfer' editing activity that hydrolyzes mischarged Thr-tRNA(Val) in a tRNA-dependent manner. This chain is Valine--tRNA ligase (valS), found in Geobacillus stearothermophilus (Bacillus stearothermophilus).